Consider the following 244-residue polypeptide: Protein crossbronx (244 aa).

The region spanning 20–176 (QQEYKILAEY…VLENIKESKE (157 aa)) is the UBC core domain.

This sequence belongs to the ubiquitin-conjugating enzyme family. FTS subfamily.

The polypeptide is Protein crossbronx (cbx) (Drosophila persimilis (Fruit fly)).